Consider the following 141-residue polypeptide: uncharacterized protein (141 aa).

A coiled-coil region spans residues 24–52 (KVQTALQKEAKTIKREQKKIKDEIDTFKT).

This is an uncharacterized protein from Invertebrate iridescent virus 6 (IIV-6).